A 328-amino-acid polypeptide reads, in one-letter code: Biotin synthase (328 aa).

Positions 48 to 277 constitute a Radical SAM core domain; that stretch reads FVGNEVHLCS…GKRITVCGGR (230 aa). [4Fe-4S] cluster contacts are provided by C66, C70, and C73. Positions 142 and 202 each coordinate [2Fe-2S] cluster.

It belongs to the radical SAM superfamily. Biotin synthase family. In terms of assembly, homodimer. It depends on [4Fe-4S] cluster as a cofactor. [2Fe-2S] cluster serves as cofactor.

The catalysed reaction is (4R,5S)-dethiobiotin + (sulfur carrier)-SH + 2 reduced [2Fe-2S]-[ferredoxin] + 2 S-adenosyl-L-methionine = (sulfur carrier)-H + biotin + 2 5'-deoxyadenosine + 2 L-methionine + 2 oxidized [2Fe-2S]-[ferredoxin]. It functions in the pathway cofactor biosynthesis; biotin biosynthesis; biotin from 7,8-diaminononanoate: step 2/2. Functionally, catalyzes the conversion of dethiobiotin (DTB) to biotin by the insertion of a sulfur atom into dethiobiotin via a radical-based mechanism. The protein is Biotin synthase of Citrifermentans bemidjiense (strain ATCC BAA-1014 / DSM 16622 / JCM 12645 / Bem) (Geobacter bemidjiensis).